Here is a 179-residue protein sequence, read N- to C-terminus: Translationally-controlled tumor protein homolog (179 aa).

The TCTP domain occupies 1–179 (MIIYKDIISG…WKHGLEEMKV (179 aa)).

Belongs to the TCTP family.

The protein resides in the cytoplasm. Its subcellular location is the cytoskeleton. In terms of biological role, involved in protein synthesis. Involved in microtubule stabilization. Involved in osmoadaptation. This is Translationally-controlled tumor protein homolog from Emericella nidulans (strain FGSC A4 / ATCC 38163 / CBS 112.46 / NRRL 194 / M139) (Aspergillus nidulans).